The sequence spans 473 residues: ATP synthase subunit beta (473 aa).

ATP is bound at residue 158–165 (GGAGVGKT).

Belongs to the ATPase alpha/beta chains family. F-type ATPases have 2 components, CF(1) - the catalytic core - and CF(0) - the membrane proton channel. CF(1) has five subunits: alpha(3), beta(3), gamma(1), delta(1), epsilon(1). CF(0) has three main subunits: a(1), b(2) and c(9-12). The alpha and beta chains form an alternating ring which encloses part of the gamma chain. CF(1) is attached to CF(0) by a central stalk formed by the gamma and epsilon chains, while a peripheral stalk is formed by the delta and b chains.

The protein localises to the cell membrane. It carries out the reaction ATP + H2O + 4 H(+)(in) = ADP + phosphate + 5 H(+)(out). Its function is as follows. Produces ATP from ADP in the presence of a proton gradient across the membrane. The catalytic sites are hosted primarily by the beta subunits. The polypeptide is ATP synthase subunit beta (Bacillus sp. (strain PS3)).